A 474-amino-acid polypeptide reads, in one-letter code: Synaptotagmin-17 (474 aa).

Residues 60-112 (WLMASRSSDKDGDSVHTASEVPLTPRTNSPDGRRSSSDTSKSTYSLTRRISSL) are disordered. Residues 96-112 (SDTSKSTYSLTRRISSL) are compositionally biased toward low complexity. Phosphoserine is present on residues S118 and S119. 2 C2 domains span residues 184-310 (QLGM…HWWK) and 321-455 (ELGE…EQWH).

The protein belongs to the synaptotagmin family. In terms of tissue distribution, expressed abundantly in brain (frontal and temporal lobes, hippocampus, hypothalamus, amygdala, substantia nigra, and pituitary), kidney, and prostate. Expressed in fetal brain, kidney and lung. Expressed in melanocytes.

The protein resides in the membrane. In terms of biological role, plays a role in dendrite formation by melanocytes. This chain is Synaptotagmin-17 (SYT17), found in Homo sapiens (Human).